The sequence spans 660 residues: Arginine--tRNA ligase, cytoplasmic (660 aa).

Methionine 1 carries the N-acetylmethionine modification. Residues 1–72 (MDVLVSECSA…QAERNKPTKN (72 aa)) form a could be involved in the assembly of the multisynthetase complex region. Residues 200 to 202 (SPN), histidine 211, tyrosine 384, aspartate 388, and glutamine 412 contribute to the L-arginine site. Positions 201 to 212 (PNIAKEMHVGHL) match the 'HIGH' region motif. Residues 529–543 (NTAAYLLYAFTRIRS) form an interaction with tRNA region.

This sequence belongs to the class-I aminoacyl-tRNA synthetase family. In terms of assembly, interacts (via N-terminus) with AIMP1 (via N-terminus); this stimulates its catalytic activity. Interacts (via N-terminus) with LARS2 (via C-terminus). Monomer. Part of a multisubunit complex that groups tRNA ligases for Arg (RARS1), Asp (DARS1), Gln (QARS1), Ile (IARS1), Leu (LARS1), Lys (KARS1), Met (MARS1) the bifunctional ligase for Glu and Pro (EPRS1) and the auxiliary subunits AIMP1/p43, AIMP2/p38 and EEF1E1/p18. Interacts with QARS1. Part of a complex composed of RARS1, QARS1 and AIMP1.

The protein resides in the cytoplasm. It is found in the cytosol. It carries out the reaction tRNA(Arg) + L-arginine + ATP = L-arginyl-tRNA(Arg) + AMP + diphosphate. Forms part of a macromolecular complex that catalyzes the attachment of specific amino acids to cognate tRNAs during protein synthesis. Modulates the secretion of AIMP1 and may be involved in generation of the inflammatory cytokine EMAP2 from AIMP1. This chain is Arginine--tRNA ligase, cytoplasmic, found in Homo sapiens (Human).